Consider the following 235-residue polypeptide: Flavonoid 3',5'-methyltransferase (235 aa).

S-adenosyl-L-methionine is bound by residues valine 51, glutamate 73, 75–76 (GV), serine 81, aspartate 99, and alanine 128. Aspartate 151 provides a ligand contact to a divalent metal cation. Aspartate 153 serves as a coordination point for S-adenosyl-L-methionine. A divalent metal cation-binding residues include aspartate 177 and asparagine 178.

The protein belongs to the class I-like SAM-binding methyltransferase superfamily. Cation-dependent O-methyltransferase family. CCoAMT subfamily. The cofactor is a divalent metal cation.

It is found in the cytoplasm. The enzyme catalyses S-adenosyl-L-methionine + a 3'-hydroxyflavonoid = S-adenosyl-L-homocysteine + a 3'-methoxyflavonoid.. It catalyses the reaction S-adenosyl-L-methionine + a 5'-hydroxy-3'-methoxyflavonoid = S-adenosyl-L-homocysteine + a 3',5'-dimethoxyflavonoid.. It functions in the pathway pigment biosynthesis; anthocyanin biosynthesis. Functionally, mediates O-methylation of anthocyanins. Anthocyanins are major pigments in grapes: at ripening initiation in red grapevine berries, the exocarp turns color from green to red and then to purple due to the accumulation and extent of methylation of anthocyanins. Catalyzes both 3' and 5' O-methylation of anthocyanins, with a preference for glycosylated substrates. Active on both anthocyanins and flavonols in vitro. Most active with delphinidin 3-glucoside but also acts on cyanidin 3-glucoside, cyanidin, myricetin, quercetin and quercetin 3-glucoside. Not able to methylate flavan type skeletons with chiral centers, such as catechins or dihydroquercetin. The sequence is that of Flavonoid 3',5'-methyltransferase (FAOMT) from Vitis vinifera (Grape).